A 142-amino-acid polypeptide reads, in one-letter code: Large ribosomal subunit protein mL43 (142 aa).

The protein belongs to the mitochondrion-specific ribosomal protein mL43 family. In terms of assembly, component of the mitochondrial large ribosomal subunit. Mature mitochondrial ribosomes consist of a small (37S) and a large (54S) subunit. The 37S subunit contains at least 33 different proteins and 1 molecule of RNA (15S). The 54S subunit contains at least 45 different proteins and 1 molecule of RNA (21S).

The protein resides in the mitochondrion. The chain is Large ribosomal subunit protein mL43 (MRPL51) from Eremothecium gossypii (strain ATCC 10895 / CBS 109.51 / FGSC 9923 / NRRL Y-1056) (Yeast).